The sequence spans 373 residues: MGYLFEETLSSNPKTPIVVDDDNELGLMAVRLANAAAFPMVLKASLELGVFDTLYAEASRTDSFLSPSEIASKLPTTPRNPGAPVLLDRMLRLLASYSMVKCEKVSVGKGERVYRAEPICRFFLKNNIQDIGSLASQVIVNFDSVFLNTWAQLKDVVLEGGDAFGRAHGGMKLFDYMGTDERFSKLFNQTGFTIAVVKKALEVYQGFKGVNVLVDVGGGVGNTLGVVTSKYPNIKGINFDLTCALAQAPSYPGVEHVAGDMFVDVPTGDAMILKRILHDWTDEDCVKILKNCWKSLPENGKVVVIELVTPDEAENGDINANIAFDMDMLMFTQCSGGKERSRAEFEALAAASCFTHCKFVCQAYHCWIIEFCK.

Residues Gly217, Asp240, Asp260, Met261, and Lys274 each contribute to the S-adenosyl-L-homocysteine site. The active-site Proton acceptor is the His278.

Belongs to the class I-like SAM-binding methyltransferase superfamily. Cation-independent O-methyltransferase family.

Its pathway is secondary metabolite biosynthesis. Involved in indole glucosinolate biosynthesis. Catalyzes methoxylation reactions of the glucosinolate indole ring. Converts the hydroxy intermediates 4-hydroxy-indol-3-yl-methylglucosinolate (4OH-I3M) and 1-hydroxy-indol-3-yl-methylglucosinolate (1OH-I3M) to 4-methoxy-indol-3-yl-methylglucosinolate (4MO-I3M) and 1-methoxy-indol-3-yl-methylglucosinolate (1MO-I3M), respectively. This Arabidopsis thaliana (Mouse-ear cress) protein is Indole glucosinolate O-methyltransferase 2.